Here is a 691-residue protein sequence, read N- to C-terminus: DNA ligase (691 aa).

Positions 1–22 (MTTAEDVAGNPYISDPRTDFES) are disordered. Residues 59-63 (DRAYD), 107-108 (SI), and Glu-137 each bind NAD(+). Lys-139 serves as the catalytic N6-AMP-lysine intermediate. The NAD(+) site is built by Arg-160, Glu-196, Lys-311, and Lys-335. Cys-426, Cys-429, Cys-442, and Cys-448 together coordinate Zn(2+). The BRCT domain maps to 608–691 (TDGDALDGQT…EELLDDAGVL (84 aa)). Positions 637–667 (ERNDGSATSSVSGNTDYLVLGDNPGQRKQDD) are disordered. The span at 641 to 651 (GSATSSVSGNT) shows a compositional bias: polar residues.

This sequence belongs to the NAD-dependent DNA ligase family. LigA subfamily. It depends on Mg(2+) as a cofactor. Mn(2+) serves as cofactor.

The catalysed reaction is NAD(+) + (deoxyribonucleotide)n-3'-hydroxyl + 5'-phospho-(deoxyribonucleotide)m = (deoxyribonucleotide)n+m + AMP + beta-nicotinamide D-nucleotide.. DNA ligase that catalyzes the formation of phosphodiester linkages between 5'-phosphoryl and 3'-hydroxyl groups in double-stranded DNA using NAD as a coenzyme and as the energy source for the reaction. It is essential for DNA replication and repair of damaged DNA. The protein is DNA ligase of Haloarcula marismortui (strain ATCC 43049 / DSM 3752 / JCM 8966 / VKM B-1809) (Halobacterium marismortui).